The following is a 331-amino-acid chain: Anthranilate phosphoribosyltransferase (331 aa).

5-phospho-alpha-D-ribose 1-diphosphate-binding positions include G79, 82–83, T87, 89–92, 107–115, and S119; these read GD, NVST, and KHGNYGVSS. An anthranilate-binding site is contributed by G79. S91 is a binding site for Mg(2+). N110 contacts anthranilate. R165 is a binding site for anthranilate. Positions 223 and 224 each coordinate Mg(2+).

This sequence belongs to the anthranilate phosphoribosyltransferase family. As to quaternary structure, homodimer. Requires Mg(2+) as cofactor.

It catalyses the reaction N-(5-phospho-beta-D-ribosyl)anthranilate + diphosphate = 5-phospho-alpha-D-ribose 1-diphosphate + anthranilate. The protein operates within amino-acid biosynthesis; L-tryptophan biosynthesis; L-tryptophan from chorismate: step 2/5. Catalyzes the transfer of the phosphoribosyl group of 5-phosphorylribose-1-pyrophosphate (PRPP) to anthranilate to yield N-(5'-phosphoribosyl)-anthranilate (PRA). The polypeptide is Anthranilate phosphoribosyltransferase (Christiangramia forsetii (strain DSM 17595 / CGMCC 1.15422 / KT0803) (Gramella forsetii)).